The chain runs to 711 residues: Putative membrane protein ActII-3 (711 aa).

12 helical membrane passes run Leu-14–Gly-34, Ala-175–Tyr-195, Leu-199–Val-219, Ala-235–Ala-255, Ala-281–Leu-301, Val-313–Phe-333, Ala-369–Asn-389, Ile-516–Val-536, Leu-540–Phe-560, Phe-573–Val-593, Ala-623–Ala-643, and Leu-645–Val-665. The interval Arg-685–Arg-711 is disordered.

Belongs to the resistance-nodulation-cell division (RND) (TC 2.A.6) family. MmpL subfamily.

Its subcellular location is the cell membrane. This chain is Putative membrane protein ActII-3 (actII-3), found in Streptomyces coelicolor (strain ATCC BAA-471 / A3(2) / M145).